A 339-amino-acid chain; its full sequence is DNA-directed RNA polymerase subunit alpha (339 aa).

An alpha N-terminal domain (alpha-NTD) region spans residues 1-233 (MVREEVAGST…DLFLPFLHAE (233 aa)). An alpha C-terminal domain (alpha-CTD) region spans residues 264 to 339 (KKGIPLNSIF…IDLLKNKLSF (76 aa)).

The protein belongs to the RNA polymerase alpha chain family. In plastids the minimal PEP RNA polymerase catalytic core is composed of four subunits: alpha, beta, beta', and beta''. When a (nuclear-encoded) sigma factor is associated with the core the holoenzyme is formed, which can initiate transcription.

The protein resides in the plastid. Its subcellular location is the chloroplast. It carries out the reaction RNA(n) + a ribonucleoside 5'-triphosphate = RNA(n+1) + diphosphate. Functionally, DNA-dependent RNA polymerase catalyzes the transcription of DNA into RNA using the four ribonucleoside triphosphates as substrates. The chain is DNA-directed RNA polymerase subunit alpha from Aegilops tauschii (Tausch's goatgrass).